A 264-amino-acid chain; its full sequence is Regulatory protein RecX (264 aa).

The protein belongs to the RecX family.

It localises to the cytoplasm. Its function is as follows. Modulates RecA activity. This Limosilactobacillus reuteri (strain DSM 20016) (Lactobacillus reuteri) protein is Regulatory protein RecX.